The primary structure comprises 264 residues: Triosephosphate isomerase (264 aa).

13–15 is a binding site for substrate; the sequence is NWK. His-98 serves as the catalytic Electrophile. The active-site Proton acceptor is Glu-170. Substrate contacts are provided by residues Gly-176, Ser-216, and 237 to 238; that span reads GG.

Belongs to the triosephosphate isomerase family. As to quaternary structure, homodimer.

The protein localises to the cytoplasm. The catalysed reaction is D-glyceraldehyde 3-phosphate = dihydroxyacetone phosphate. Its pathway is carbohydrate biosynthesis; gluconeogenesis. It functions in the pathway carbohydrate degradation; glycolysis; D-glyceraldehyde 3-phosphate from glycerone phosphate: step 1/1. In terms of biological role, involved in the gluconeogenesis. Catalyzes stereospecifically the conversion of dihydroxyacetone phosphate (DHAP) to D-glyceraldehyde-3-phosphate (G3P). This is Triosephosphate isomerase from Protochlamydia amoebophila (strain UWE25).